The primary structure comprises 881 residues: Translation initiation factor IF-2 (881 aa).

Disordered stretches follow at residues 31 to 147 and 165 to 291; these read KLAQ…TKVP and SVVG…HYDE. Residues 42–55 are compositionally biased toward basic and acidic residues; sequence NSSEKPSAKVAEKV. The span at 68–77 shows a compositional bias: polar residues; sequence ATPESVSSET. A compositionally biased stretch (acidic residues) spans 114-128; that stretch reads VEEEIASSTDSEPEV. A compositionally biased stretch (basic and acidic residues) spans 191-203; it reads PKKEDKPAPKERS. Residues 204-233 show a composition bias toward polar residues; it reads GQAQAKPQQSSEASSENKPHSPNNNRSSQP. Residues 235–267 show a composition bias toward basic and acidic residues; sequence YRRDTSKKPGSDFRDRAKKDDNPKAFTGRDRYG. The span at 278–287 shows a compositional bias: basic residues; that stretch reads RKKRVQKTKK. One can recognise a tr-type G domain in the interval 387–556; sequence IRPPIVAFMG…ALQAEVLELK (170 aa). The interval 396–403 is G1; the sequence is GHVDHGKT. 396-403 is a GTP binding site; that stretch reads GHVDHGKT. Residues 421-425 form a G2 region; the sequence is AITQH. A G3 region spans residues 442–445; sequence DTPG. Residues 442–446 and 496–499 each bind GTP; these read DTPGH and NKCD. Positions 496 to 499 are G4; it reads NKCD. Positions 532-534 are G5; it reads SAK.

This sequence belongs to the TRAFAC class translation factor GTPase superfamily. Classic translation factor GTPase family. IF-2 subfamily.

The protein localises to the cytoplasm. One of the essential components for the initiation of protein synthesis. Protects formylmethionyl-tRNA from spontaneous hydrolysis and promotes its binding to the 30S ribosomal subunits. Also involved in the hydrolysis of GTP during the formation of the 70S ribosomal complex. The chain is Translation initiation factor IF-2 from Chlamydia felis (strain Fe/C-56) (Chlamydophila felis).